Reading from the N-terminus, the 155-residue chain is Ribosome maturation factor RimP (155 aa).

This sequence belongs to the RimP family.

It localises to the cytoplasm. Required for maturation of 30S ribosomal subunits. This chain is Ribosome maturation factor RimP, found in Staphylococcus aureus (strain JH9).